A 184-amino-acid polypeptide reads, in one-letter code: Photosystem I assembly protein Ycf4 (184 aa).

2 helical membrane passes run 19 to 39 (ISNFCWAFLLFLGSLGFVLVG) and 64 to 84 (LVMSFYGIAGLFISSYLWCTI).

It belongs to the Ycf4 family.

It localises to the plastid. The protein resides in the chloroplast thylakoid membrane. Functionally, seems to be required for the assembly of the photosystem I complex. This Oenothera elata subsp. hookeri (Hooker's evening primrose) protein is Photosystem I assembly protein Ycf4.